The primary structure comprises 622 residues: Probable ATP-citrate synthase (622 aa).

ATP-binding positions include Ala228–Gly248 and Phe279–Ala305. Residue Glu245 participates in Mg(2+) binding. His287 acts as the Tele-phosphohistidine intermediate in catalysis. Leu306–Ser316 contributes to the CoA binding site.

It in the N-terminal section; belongs to the succinate/malate CoA ligase beta subunit family. The protein in the C-terminal section; belongs to the succinate/malate CoA ligase alpha subunit family. In terms of assembly, homotetramer.

It localises to the cytoplasm. The enzyme catalyses oxaloacetate + acetyl-CoA + ADP + phosphate = citrate + ATP + CoA. Functionally, catalyzes the cleavage of citrate into oxaloacetate and acetyl-CoA, the latter serving as common substrate in multiple biochemical reactions in protein, carbohydrate and lipid metabolism. The polypeptide is Probable ATP-citrate synthase (acly) (Dictyostelium discoideum (Social amoeba)).